Consider the following 458-residue polypeptide: Phosphoglucosamine mutase (458 aa).

The active-site Phosphoserine intermediate is the serine 108. The Mg(2+) site is built by serine 108, aspartate 247, aspartate 249, and aspartate 251. The residue at position 108 (serine 108) is a Phosphoserine.

It belongs to the phosphohexose mutase family. Requires Mg(2+) as cofactor. In terms of processing, activated by phosphorylation.

It carries out the reaction alpha-D-glucosamine 1-phosphate = D-glucosamine 6-phosphate. Catalyzes the conversion of glucosamine-6-phosphate to glucosamine-1-phosphate. This is Phosphoglucosamine mutase from Thiobacillus denitrificans (strain ATCC 25259 / T1).